We begin with the raw amino-acid sequence, 445 residues long: Cyclic GMP-AMP phosphodiesterase SMPDL3A (445 aa).

The signal sequence occupies residues 1-22; it reads MALLGNFLCCLLVAWLCGPGLG. Residues D42 and H44 each coordinate Zn(2+). Residues C59 and C78 are joined by a disulfide bond. An N-linked (GlcNAc...) asparagine glycan is attached at N66. Residue D107 participates in Zn(2+) binding. Residue H111 participates in ATP binding. N-linked (GlcNAc...) asparagine glycosylation is present at N128. Zn(2+) is bound at residue N148. N148 and H149 together coordinate ATP. N219 and N235 each carry an N-linked (GlcNAc...) asparagine glycan. Residue H249 coordinates Zn(2+). An ATP-binding site is contributed by Y257. 2 residues coordinate Zn(2+): H290 and H292. N-linked (GlcNAc...) asparagine glycans are attached at residues N353 and N364. Disulfide bonds link C417/C421 and C427/C440.

This sequence belongs to the acid sphingomyelinase family. As to quaternary structure, monomer. Homodimer; homodimerizes following 2',3'-cGAMP-binding. Zn(2+) serves as cofactor. In terms of processing, N-glycosylated. Detected in blood serum (at protein level).

It localises to the secreted. It carries out the reaction 2',3'-cGAMP + H2O = 5'-pGpA(2'-5') + H(+). The enzyme catalyses 5'-pGpA(2'-5') + H2O = 5'-GpA(2'-5') + phosphate. It catalyses the reaction a ribonucleoside 5'-triphosphate + H2O = a ribonucleoside 5'-diphosphate + phosphate + H(+). The catalysed reaction is ATP + H2O = ADP + phosphate + H(+). Requires micromolar levels of Zn(2+) for activity. Inhibited by millimolar levels of Zn(2+). Functionally, cyclic-nucleotide phosphodiesterase that acts as a negative regulator of innate immunity by mediating degradation of 2',3'-cGAMP, thereby inhibiting the cGAS-STING signaling. Specifically linearizes 2',3'-cGAMP into 2'5'-bond pGpA and further hydrolyzes pGpA to produce GpA. Also has in vitro nucleotide phosphodiesterase activity with nucleoside triphosphates, such as ATP. Has in vitro activity with p-nitrophenyl-TMP. Has lower activity with nucleoside diphosphates, and no activity with nucleoside monophosphates. Has in vitro activity with CDP-choline, giving rise to CMP and phosphocholine. Has in vitro activity with CDP-ethanolamine. Does not have sphingomyelin phosphodiesterase activity. The sequence is that of Cyclic GMP-AMP phosphodiesterase SMPDL3A from Mus musculus (Mouse).